An 895-amino-acid polypeptide reads, in one-letter code: Pyruvate dehydrogenase E1 component (895 aa).

The tract at residues 1 to 20 (MSAVPEQILGASSANDADPQ) is disordered.

Homodimer. Part of the PDH complex, consisting of multiple copies of pyruvate dehydrogenase (E1), dihydrolipoamide acetyltransferase (E2) and lipoamide dehydrogenase (E3). Requires thiamine diphosphate as cofactor.

It carries out the reaction N(6)-[(R)-lipoyl]-L-lysyl-[protein] + pyruvate + H(+) = N(6)-[(R)-S(8)-acetyldihydrolipoyl]-L-lysyl-[protein] + CO2. Its function is as follows. Component of the pyruvate dehydrogenase (PDH) complex, that catalyzes the overall conversion of pyruvate to acetyl-CoA and CO(2). This chain is Pyruvate dehydrogenase E1 component (pdhA), found in Cupriavidus necator (strain ATCC 17699 / DSM 428 / KCTC 22496 / NCIMB 10442 / H16 / Stanier 337) (Ralstonia eutropha).